The following is a 341-amino-acid chain: Probable long-chain-alcohol O-fatty-acyltransferase 1 (341 aa).

The next 8 membrane-spanning stretches (helical) occupy residues 7–27 (NLIEVWISALISLSYCYYISS), 36–56 (LLSILPVCILFLVLPLFLSCV), 58–78 (FCAISVLFLSWLANFKLLLFA), 120–140 (PMPKWVLAVKILVLGVLLHVY), 149–169 (FVVLALYCLHIYLEVELVLVF), 233–253 (MFAGVMASFFVSGLMHELLYF), 261–281 (TWEVTCFFVLHGAATATEIAV), and 293–313 (AVSGLVVLTFVSVTGVWLFLA).

It belongs to the wax synthase family.

The protein localises to the membrane. It carries out the reaction a long chain fatty alcohol + a fatty acyl-CoA = a wax ester + CoA. In terms of biological role, catalyzes the final step in the synthesis of long-chain linear esters (waxes). In Arabidopsis thaliana (Mouse-ear cress), this protein is Probable long-chain-alcohol O-fatty-acyltransferase 1 (AT1).